Consider the following 501-residue polypeptide: Beta-secretase 1 (501 aa).

The first 21 residues, M1 to G21, serve as a signal peptide directing secretion. Positions T22–R45 are excised as a propeptide. At T22–T457 the chain is on the extracellular side. The disordered stretch occupies residues L39–G58. Positions Y75–A416 constitute a Peptidase A1 domain. D93 is a catalytic residue. K126 carries the post-translational modification N6-acetyllysine. 3 N-linked (GlcNAc...) asparagine glycosylation sites follow: N153, N172, and N223. 3 cysteine pairs are disulfide-bonded: C216-C420, C278-C443, and C330-C380. An N6-acetyllysine mark is found at K275, K279, and K285. Residue D289 is part of the active site. Residues K299, K300, and K307 each carry the N6-acetyllysine modification. Residue N354 is glycosylated (N-linked (GlcNAc...) asparagine). The chain crosses the membrane as a helical span at residues I458–C478. 4 S-palmitoyl cysteine lipidation sites follow: C474, C478, C482, and C485. The Cytoplasmic segment spans residues Q479–K501. The segment at Q479 to K501 is interaction with RTN3. The short motif at D496–L500 is the DXXLL element. S498 is subject to Phosphoserine. Residue K501 forms a Glycyl lysine isopeptide (Lys-Gly) (interchain with G-Cter in ubiquitin) linkage.

The protein belongs to the peptidase A1 family. In terms of assembly, monomer. Interacts (via DXXLL motif) with GGA1, GGA2 and GGA3 (via their VHS domain); the interaction highly increases when BACE1 is phosphorylated at Ser-498. Interacts with RTN1; RTN2; RTN3 and RTN4; the interaction leads to inhibition of amyloid precursor protein processing. Interacts with SNX6. Interacts with PCSK9. Interacts with NAT8 and NAT8B. Interacts with BIN1. Interacts (via extracellular domain) with ADAM10 (via extracellular domain). Interacts with SORL1; this interaction may affect binding with APP and hence reduce APP cleavage. Interacts with NRDC AND NRG1. In terms of processing, N-Glycosylated. Addition of a bisecting N-acetylglucosamine by MGAT3 blocks lysosomal targeting, further degradation and is required for maintaining stability under stress conditions. Acetylated in the endoplasmic reticulum at Lys-126, Lys-275, Lys-279, Lys-285, Lys-299, Lys-300 and Lys-307. Acetylation by NAT8 and NAT8B is transient and deacetylation probably occurs in the Golgi. Acetylation regulates the maturation, the transport to the plasma membrane, the stability and the expression of the protein. Post-translationally, palmitoylation mediates lipid raft localization. In terms of processing, ubiquitinated at Lys-501, ubiquitination leads to lysosomal degradation. Monoubiquitinated and 'Lys-63'-linked polyubitinated. Deubiquitnated by USP8; inhibits lysosomal degradation. Phosphorylation at Ser-498 is required for interaction with GGA1 and retrograded transport from endosomal compartments to the trans-Golgi network. Non-phosphorylated BACE1 enters a direct recycling route to the cell surface. In terms of tissue distribution, expressed at high levels in the brain and pancreas. In the brain, expression is highest in the substantia nigra, locus coruleus and medulla oblongata.

It localises to the cell membrane. It is found in the golgi apparatus. The protein resides in the trans-Golgi network. Its subcellular location is the endoplasmic reticulum. The protein localises to the endosome. It localises to the cell surface. It is found in the cytoplasmic vesicle membrane. The protein resides in the membrane raft. Its subcellular location is the lysosome. The protein localises to the late endosome. It localises to the early endosome. It is found in the recycling endosome. The protein resides in the cell projection. Its subcellular location is the axon. The protein localises to the dendrite. It catalyses the reaction Broad endopeptidase specificity. Cleaves Glu-Val-Asn-Leu-|-Asp-Ala-Glu-Phe in the Swedish variant of Alzheimer's amyloid precursor protein.. Inhibited by RTN3 and RTN4. Functionally, responsible for the proteolytic processing of the amyloid precursor protein (APP). Cleaves at the N-terminus of the A-beta peptide sequence, between residues 671 and 672 of APP, leads to the generation and extracellular release of beta-cleaved soluble APP, and a corresponding cell-associated C-terminal fragment which is later released by gamma-secretase. Cleaves CHL1. This is Beta-secretase 1 from Homo sapiens (Human).